A 692-amino-acid chain; its full sequence is DNA ligase (692 aa).

Residues M1–A14 show a composition bias toward polar residues. The disordered stretch occupies residues M1–A27. Residues D54–D58, S103–L104, and E134 contribute to the NAD(+) site. K136 (N6-AMP-lysine intermediate) is an active-site residue. R157, E194, K311, and K335 together coordinate NAD(+). Positions 429, 432, 447, and 454 each coordinate Zn(2+). The BRCT domain maps to N612–E692.

It belongs to the NAD-dependent DNA ligase family. LigA subfamily. Mg(2+) serves as cofactor. Mn(2+) is required as a cofactor.

It catalyses the reaction NAD(+) + (deoxyribonucleotide)n-3'-hydroxyl + 5'-phospho-(deoxyribonucleotide)m = (deoxyribonucleotide)n+m + AMP + beta-nicotinamide D-nucleotide.. In terms of biological role, DNA ligase that catalyzes the formation of phosphodiester linkages between 5'-phosphoryl and 3'-hydroxyl groups in double-stranded DNA using NAD as a coenzyme and as the energy source for the reaction. It is essential for DNA replication and repair of damaged DNA. The chain is DNA ligase from Janthinobacterium sp. (strain Marseille) (Minibacterium massiliensis).